We begin with the raw amino-acid sequence, 372 residues long: tRNA-specific 2-thiouridylase MnmA (372 aa).

Residues 16–23 and Met42 contribute to the ATP site; that span reads GMSGGVDS. The segment at 102–104 is interaction with target base in tRNA; the sequence is NPD. Residue Cys107 is the Nucleophile of the active site. The cysteines at positions 107 and 205 are disulfide-linked. Gly132 contacts ATP. Positions 155 to 157 are interaction with tRNA; the sequence is KDQ. The active-site Cysteine persulfide intermediate is Cys205. The interval 317–318 is interaction with tRNA; the sequence is RY.

The protein belongs to the MnmA/TRMU family.

Its subcellular location is the cytoplasm. The enzyme catalyses S-sulfanyl-L-cysteinyl-[protein] + uridine(34) in tRNA + AH2 + ATP = 2-thiouridine(34) in tRNA + L-cysteinyl-[protein] + A + AMP + diphosphate + H(+). Catalyzes the 2-thiolation of uridine at the wobble position (U34) of tRNA, leading to the formation of s(2)U34. The sequence is that of tRNA-specific 2-thiouridylase MnmA from Shewanella sp. (strain W3-18-1).